We begin with the raw amino-acid sequence, 201 residues long: ATP-dependent Clp protease proteolytic subunit (201 aa).

The active-site Nucleophile is Ser-101. His-126 is a catalytic residue.

It belongs to the peptidase S14 family. In terms of assembly, fourteen ClpP subunits assemble into 2 heptameric rings which stack back to back to give a disk-like structure with a central cavity, resembling the structure of eukaryotic proteasomes.

It localises to the cytoplasm. The enzyme catalyses Hydrolysis of proteins to small peptides in the presence of ATP and magnesium. alpha-casein is the usual test substrate. In the absence of ATP, only oligopeptides shorter than five residues are hydrolyzed (such as succinyl-Leu-Tyr-|-NHMec, and Leu-Tyr-Leu-|-Tyr-Trp, in which cleavage of the -Tyr-|-Leu- and -Tyr-|-Trp bonds also occurs).. Cleaves peptides in various proteins in a process that requires ATP hydrolysis. Has a chymotrypsin-like activity. Plays a major role in the degradation of misfolded proteins. This Francisella tularensis subsp. tularensis (strain FSC 198) protein is ATP-dependent Clp protease proteolytic subunit.